The primary structure comprises 147 residues: Small ribosomal subunit protein uS9 (147 aa).

This sequence belongs to the universal ribosomal protein uS9 family.

This chain is Small ribosomal subunit protein uS9 (rps16), found in Dictyostelium discoideum (Social amoeba).